The primary structure comprises 306 residues: Curved DNA-binding protein (306 aa).

The 65-residue stretch at 5-69 (DYYAIMGVKP…QRRAEYDQMW (65 aa)) folds into the J domain.

The protein localises to the cytoplasm. It is found in the nucleoid. DNA-binding protein that preferentially recognizes a curved DNA sequence. It is probably a functional analog of DnaJ; displays overlapping activities with DnaJ, but functions under different conditions, probably acting as a molecular chaperone in an adaptive response to environmental stresses other than heat shock. Lacks autonomous chaperone activity; binds native substrates and targets them for recognition by DnaK. Its activity is inhibited by the binding of CbpM. In Escherichia coli (strain 55989 / EAEC), this protein is Curved DNA-binding protein.